The primary structure comprises 310 residues: E3 ubiquitin-protein ligase AIP2 (310 aa).

Residues 230–271 form an RING-type; atypical zinc finger; sequence CCICKENLVIGDKMQELPCKHTFHPPCLKPWLDEHNSCPICR. Positions 276 to 306 form a coiled coil; it reads TDDQKYENWKEREKEAEEERKGAENAVRGGE. A compositionally biased stretch (basic and acidic residues) spans 285–298; that stretch reads KEREKEAEEERKGA. A disordered region spans residues 285–310; sequence KEREKEAEEERKGAENAVRGGEYMYV.

Interacts with ABI3 (via C-terminus). Post-translationally, auto-ubiquitinated. In terms of tissue distribution, highly expressed in leaves and at lower levels in flowers and seeds.

It localises to the nucleus. The protein localises to the cytoplasm. It carries out the reaction S-ubiquitinyl-[E2 ubiquitin-conjugating enzyme]-L-cysteine + [acceptor protein]-L-lysine = [E2 ubiquitin-conjugating enzyme]-L-cysteine + N(6)-ubiquitinyl-[acceptor protein]-L-lysine.. It functions in the pathway protein modification; protein ubiquitination. Its function is as follows. E3 ubiquitin-protein ligase that acts as a negative regulator of abscisic acid (ABA) signaling. Mediates ubiquitination and subsequent proteasomal degradation of the transcription factor ABI3. The chain is E3 ubiquitin-protein ligase AIP2 (AIP2) from Arabidopsis thaliana (Mouse-ear cress).